Reading from the N-terminus, the 277-residue chain is Large ribosomal subunit protein uL2 (277 aa).

The interval 212-277 (RWRGKRPHVR…KFIVRGRKSK (66 aa)) is disordered. Over residues 254–277 (TAGKKTRDKKKASTKFIVRGRKSK) the composition is skewed to basic residues.

This sequence belongs to the universal ribosomal protein uL2 family. As to quaternary structure, part of the 50S ribosomal subunit. Forms a bridge to the 30S subunit in the 70S ribosome.

One of the primary rRNA binding proteins. Required for association of the 30S and 50S subunits to form the 70S ribosome, for tRNA binding and peptide bond formation. It has been suggested to have peptidyltransferase activity; this is somewhat controversial. Makes several contacts with the 16S rRNA in the 70S ribosome. In Leuconostoc mesenteroides subsp. mesenteroides (strain ATCC 8293 / DSM 20343 / BCRC 11652 / CCM 1803 / JCM 6124 / NCDO 523 / NBRC 100496 / NCIMB 8023 / NCTC 12954 / NRRL B-1118 / 37Y), this protein is Large ribosomal subunit protein uL2.